Here is a 250-residue protein sequence, read N- to C-terminus: 1-(5-phosphoribosyl)-5-[(5-phosphoribosylamino)methylideneamino] imidazole-4-carboxamide isomerase (250 aa).

Aspartate 7 serves as the catalytic Proton acceptor. Aspartate 129 serves as the catalytic Proton donor.

Belongs to the HisA/HisF family.

Its subcellular location is the cytoplasm. It carries out the reaction 1-(5-phospho-beta-D-ribosyl)-5-[(5-phospho-beta-D-ribosylamino)methylideneamino]imidazole-4-carboxamide = 5-[(5-phospho-1-deoxy-D-ribulos-1-ylimino)methylamino]-1-(5-phospho-beta-D-ribosyl)imidazole-4-carboxamide. It participates in amino-acid biosynthesis; L-histidine biosynthesis; L-histidine from 5-phospho-alpha-D-ribose 1-diphosphate: step 4/9. This Shewanella denitrificans (strain OS217 / ATCC BAA-1090 / DSM 15013) protein is 1-(5-phosphoribosyl)-5-[(5-phosphoribosylamino)methylideneamino] imidazole-4-carboxamide isomerase.